Reading from the N-terminus, the 540-residue chain is Glucose-6-phosphate isomerase (540 aa).

The Proton donor role is filled by Glu-350. Catalysis depends on residues His-381 and Lys-503.

Belongs to the GPI family.

The protein resides in the cytoplasm. It catalyses the reaction alpha-D-glucose 6-phosphate = beta-D-fructose 6-phosphate. The protein operates within carbohydrate biosynthesis; gluconeogenesis. It participates in carbohydrate degradation; glycolysis; D-glyceraldehyde 3-phosphate and glycerone phosphate from D-glucose: step 2/4. Catalyzes the reversible isomerization of glucose-6-phosphate to fructose-6-phosphate. The protein is Glucose-6-phosphate isomerase of Burkholderia mallei (strain NCTC 10247).